A 110-amino-acid polypeptide reads, in one-letter code: V-type proton ATPase subunit G1 (110 aa).

At Met1 the chain carries N-acetylmethionine. The interval 60–80 is disordered; sequence KLEETSGDSGANVKRLEQETD.

This sequence belongs to the V-ATPase G subunit family. V-ATPase is a heteromultimeric enzyme composed of a peripheral catalytic V1 complex (components A to H) attached to an integral membrane V0 proton pore complex (components: a, c, c'', d and e).

It is found in the cell membrane. It localises to the vacuole membrane. Catalytic subunit of the peripheral V1 complex of vacuolar ATPase (V-ATPase). V-ATPase is responsible for acidifying a variety of intracellular compartments in eukaryotic cells. The chain is V-type proton ATPase subunit G1 (VHA-G1) from Arabidopsis thaliana (Mouse-ear cress).